A 301-amino-acid polypeptide reads, in one-letter code: DNA repair protein RecO (301 aa).

Positions 272–301 (PTPSGQGSPVAAAAFSEEDSETLGSNLKKL) are disordered.

The protein belongs to the RecO family.

Functionally, involved in DNA repair and RecF pathway recombination. The chain is DNA repair protein RecO from Synechococcus sp. (strain JA-3-3Ab) (Cyanobacteria bacterium Yellowstone A-Prime).